A 235-amino-acid polypeptide reads, in one-letter code: 7-cyano-7-deazaguanine synthase (235 aa).

An ATP-binding site is contributed by 16–26 (FSGGQDSTTCL). Residues Cys-193, Cys-201, Cys-204, and Cys-207 each contribute to the Zn(2+) site.

The protein belongs to the QueC family. Zn(2+) is required as a cofactor.

It catalyses the reaction 7-carboxy-7-deazaguanine + NH4(+) + ATP = 7-cyano-7-deazaguanine + ADP + phosphate + H2O + H(+). Its pathway is purine metabolism; 7-cyano-7-deazaguanine biosynthesis. Its function is as follows. Catalyzes the ATP-dependent conversion of 7-carboxy-7-deazaguanine (CDG) to 7-cyano-7-deazaguanine (preQ(0)). This chain is 7-cyano-7-deazaguanine synthase, found in Actinobacillus succinogenes (strain ATCC 55618 / DSM 22257 / CCUG 43843 / 130Z).